The primary structure comprises 343 residues: MASNSSNGTTTTKPPPMPSPLRNSKFFQSNMRILVTGGAGFIGSHLVDKLMQNEKNEVIVADNYFTGSKDNLKKWIGHPRFELIRHDVTEPLFVEVDQIYHLACPASPIFYKYNPVKTIKTNVIGTLNMLGLAKRVGARILLTSTSEVYGDPLVHPQTESYWGNVNPIGVRSCYDEGKRVAETLMFDYHRQHGIEIRIARIFNTYGPRMNIDDGRVVSNFIAQALRGEALTVQKPGTQTRSFCYVSDMVEGLMRLMEGDQTGPINIGNPGEFTMVELAETVKELIKPDVEIKMVENTPDDPRQRKPDISKAKEVLGWEPKVKLREGLPLMEEDFRLRLGVPKK.

Positions 1-22 (MASNSSNGTTTTKPPPMPSPLR) are disordered. At A2 the chain carries N-acetylalanine. Residue 62–87 (DNYFTGSKDNLKKWIGHPRFELIRHD) coordinates NAD(+). Residue R171 coordinates substrate. The active-site Proton acceptor is Y174. Position 174–178 (174–178 (YDEGK)) interacts with NAD(+). N203 contacts substrate. Residue R215 coordinates NAD(+). Substrate is bound by residues 216 to 220 (VVSNF), 233 to 240 (QKPGTQTR), and 300 to 304 (DPRQR).

This sequence belongs to the NAD(P)-dependent epimerase/dehydratase family. UDP-glucuronic acid decarboxylase subfamily. Requires NAD(+) as cofactor.

It localises to the cytoplasm. It catalyses the reaction UDP-alpha-D-glucuronate + H(+) = UDP-alpha-D-xylose + CO2. It functions in the pathway nucleotide-sugar biosynthesis; UDP-alpha-D-xylose biosynthesis; UDP-alpha-D-xylose from UDP-alpha-D-glucuronate: step 1/1. In terms of biological role, catalyzes the NAD-dependent decarboxylation of UDP-glucuronic acid to UDP-xylose. Necessary for the biosynthesis of the core tetrasaccharide in glycosaminoglycan biosynthesis. The polypeptide is UDP-glucuronic acid decarboxylase 6 (UXS6) (Arabidopsis thaliana (Mouse-ear cress)).